The primary structure comprises 270 residues: Glucosamine-6-phosphate deaminase (270 aa).

Catalysis depends on D72, which acts as the Proton acceptor; for enolization step. The active-site For ring-opening step is D141. The active-site Proton acceptor; for ring-opening step is the H143. E148 (for ring-opening step) is an active-site residue.

Belongs to the glucosamine/galactosamine-6-phosphate isomerase family. NagB subfamily. In terms of assembly, homohexamer.

It catalyses the reaction alpha-D-glucosamine 6-phosphate + H2O = beta-D-fructose 6-phosphate + NH4(+). The protein operates within amino-sugar metabolism; N-acetylneuraminate degradation; D-fructose 6-phosphate from N-acetylneuraminate: step 5/5. Allosterically activated by N-acetylglucosamine 6-phosphate (GlcNAc6P). Functionally, catalyzes the reversible isomerization-deamination of glucosamine 6-phosphate (GlcN6P) to form fructose 6-phosphate (Fru6P) and ammonium ion. This is Glucosamine-6-phosphate deaminase from Haemophilus influenzae (strain 86-028NP).